The chain runs to 360 residues: Phenylalanine--tRNA ligase alpha subunit (360 aa).

Glu260 lines the Mg(2+) pocket.

Belongs to the class-II aminoacyl-tRNA synthetase family. Phe-tRNA synthetase alpha subunit type 1 subfamily. In terms of assembly, tetramer of two alpha and two beta subunits. Requires Mg(2+) as cofactor.

Its subcellular location is the cytoplasm. The catalysed reaction is tRNA(Phe) + L-phenylalanine + ATP = L-phenylalanyl-tRNA(Phe) + AMP + diphosphate + H(+). In Rhizobium rhizogenes (strain K84 / ATCC BAA-868) (Agrobacterium radiobacter), this protein is Phenylalanine--tRNA ligase alpha subunit.